A 209-amino-acid polypeptide reads, in one-letter code: Large ribosomal subunit protein bL25 (209 aa).

The protein belongs to the bacterial ribosomal protein bL25 family. CTC subfamily. As to quaternary structure, part of the 50S ribosomal subunit; part of the 5S rRNA/L5/L18/L25 subcomplex. Contacts the 5S rRNA. Binds to the 5S rRNA independently of L5 and L18.

In terms of biological role, this is one of the proteins that binds to the 5S RNA in the ribosome where it forms part of the central protuberance. This is Large ribosomal subunit protein bL25 from Chlorobium phaeobacteroides (strain BS1).